A 186-amino-acid polypeptide reads, in one-letter code: Ribosome-recycling factor (186 aa).

Belongs to the RRF family.

It localises to the cytoplasm. In terms of biological role, responsible for the release of ribosomes from messenger RNA at the termination of protein biosynthesis. May increase the efficiency of translation by recycling ribosomes from one round of translation to another. The chain is Ribosome-recycling factor from Acidovorax ebreus (strain TPSY) (Diaphorobacter sp. (strain TPSY)).